The sequence spans 147 residues: Nucleoside diphosphate kinase (147 aa).

Positions 9, 57, 85, 91, 102, and 112 each coordinate ATP. The active-site Pros-phosphohistidine intermediate is the His115.

It belongs to the NDK family. As to quaternary structure, homotetramer. Mg(2+) is required as a cofactor.

The protein resides in the cytoplasm. The catalysed reaction is a 2'-deoxyribonucleoside 5'-diphosphate + ATP = a 2'-deoxyribonucleoside 5'-triphosphate + ADP. It catalyses the reaction a ribonucleoside 5'-diphosphate + ATP = a ribonucleoside 5'-triphosphate + ADP. In terms of biological role, major role in the synthesis of nucleoside triphosphates other than ATP. The ATP gamma phosphate is transferred to the NDP beta phosphate via a ping-pong mechanism, using a phosphorylated active-site intermediate. The chain is Nucleoside diphosphate kinase from Thermosipho melanesiensis (strain DSM 12029 / CIP 104789 / BI429).